A 155-amino-acid polypeptide reads, in one-letter code: Transcriptional repressor NrdR (155 aa).

A zinc finger spans residues 3–34 (CPYCGHLEDRVVDSRETQDGQATRRRRACLSC). An ATP-cone domain is found at 49-139 (PQVVKKDGRR…VYRAFRDVGE (91 aa)).

This sequence belongs to the NrdR family. Zn(2+) is required as a cofactor.

Negatively regulates transcription of bacterial ribonucleotide reductase nrd genes and operons by binding to NrdR-boxes. This chain is Transcriptional repressor NrdR, found in Anaeromyxobacter dehalogenans (strain 2CP-1 / ATCC BAA-258).